A 142-amino-acid chain; its full sequence is DNA-directed RNA polymerases I, II, and III subunit rpabc3 (142 aa).

The non-specific ssDNA binding stretch occupies residues 16-40 (DPDGKKFDRVSRFVCYSENYEMDLQ).

This sequence belongs to the eukaryotic RPB8 RNA polymerase subunit family. In terms of assembly, component of the RNA polymerase I (Pol I), RNA polymerase II (Pol II) and RNA polymerase III (Pol III) complexes consisting of at least 13, 12 and 17 subunits, respectively. Directly interacts with POLR2A.

The protein localises to the nucleus. The protein resides in the nucleolus. DNA-dependent RNA polymerase catalyzes the transcription of DNA into RNA using the four ribonucleoside triphosphates as substrates. Common component of RNA polymerases I, II and III which synthesize ribosomal RNA precursors, mRNA precursors and many functional non-coding RNAs, and small RNAs, such as 5S rRNA and tRNAs, respectively. The polypeptide is DNA-directed RNA polymerases I, II, and III subunit rpabc3 (polr2h) (Dictyostelium discoideum (Social amoeba)).